A 143-amino-acid chain; its full sequence is Peptide methionine sulfoxide reductase MsrB (143 aa).

The MsrB domain occupies Asp16–Arg139. 4 residues coordinate Zn(2+): Cys55, Cys58, Cys104, and Cys107. Cys128 functions as the Nucleophile in the catalytic mechanism.

This sequence belongs to the MsrB Met sulfoxide reductase family. Requires Zn(2+) as cofactor.

The enzyme catalyses L-methionyl-[protein] + [thioredoxin]-disulfide + H2O = L-methionyl-(R)-S-oxide-[protein] + [thioredoxin]-dithiol. This Burkholderia orbicola (strain MC0-3) protein is Peptide methionine sulfoxide reductase MsrB.